The chain runs to 1842 residues: RNA1 polyprotein (1842 aa).

Positions 458-626 (LDKLTELHNS…MAYDPGNPCA (169 aa)) constitute an SF3 helicase domain. 487–494 (GKSGVGKT) is a binding site for ATP. Residues 883-903 (LWSISGNASFVAGAASIFTIG) traverse the membrane as a helical segment. Serine 909 is modified (O-(5'-phospho-RNA)-serine). The region spanning 935–1137 (GPCFGDSALW…ASPVPWDPDF (203 aa)) is the Peptidase C3 domain. Residues histidine 975, glutamate 1011, and cysteine 1100 each act as for picornain 3C-like protease activity in the active site. One can recognise a RdRp catalytic domain in the interval 1417-1544 (NSILCCDYSR…SVSEAISSKF (128 aa)).

Specific enzymatic cleavages by picornain 3C-like protease in vivo yield mature proteins. Picornain 3C-like protease is autocatalytically processed. In terms of processing, uridylylated by the polymerase and is covalently linked to the 5'-end of genomic RNA. This uridylylated form acts as a nucleotide-peptide primer for the polymerase.

It is found in the host membrane. It localises to the host cytoplasm. The protein resides in the host perinuclear region. Its subcellular location is the host endoplasmic reticulum. The enzyme catalyses RNA(n) + a ribonucleoside 5'-triphosphate = RNA(n+1) + diphosphate. In terms of biological role, thiol protease that cleaves the RNA1 and RNA2 polyproteins. Functionally, plays a role in RNA replication. It is covalently linked to the 5'terminus of both viral single-stranded RNA1 and RNA2 molecules. Down-regulates the RNA1 polyprotein processing and enhances trans-cleavage of RNA2 polyproteins. The protease cofactor and the putative helicase seem to target the replication complexes to ER membranes. Their physical association causes the membrane rearrangement of host ER that may result in formation of the small membranous vesicles that are the site of viral RNA synthesis. Its function is as follows. The protease cofactor and the putative helicase seem to target the replication complexes to ER membranes. Their physical association causes the membrane rearrangement of host ER that may result in formation of the small membranous vesicles that are the site of viral RNA synthesis. In terms of biological role, replicates the viral genome. This chain is RNA1 polyprotein (RNA1), found in Capsicum annuum (Capsicum pepper).